A 123-amino-acid polypeptide reads, in one-letter code: MADITVELVSVERMLWSGKASIVTAQTVEGEIGVLPGHEPLLAQLVDNGVVTIRPVDGDKLVAAVQGGFLSISKEKVTILAEYAIWADEVNTAESESHLQADDEISKARAEAELKAVRRKAEA.

Belongs to the ATPase epsilon chain family. As to quaternary structure, F-type ATPases have 2 components, CF(1) - the catalytic core - and CF(0) - the membrane proton channel. CF(1) has five subunits: alpha(3), beta(3), gamma(1), delta(1), epsilon(1). CF(0) has three main subunits: a, b and c.

It is found in the cell membrane. Produces ATP from ADP in the presence of a proton gradient across the membrane. The polypeptide is ATP synthase epsilon chain (Corynebacterium diphtheriae (strain ATCC 700971 / NCTC 13129 / Biotype gravis)).